Consider the following 308-residue polypeptide: Zinc transporter ZIP9 (308 aa).

Residues 4 to 24 form a helical membrane-spanning segment; that stretch reads FLSISLLSVAMLVGCYVAGII. The N-linked (GlcNAc...) asparagine glycan is linked to asparagine 29. 5 helical membrane passes run 35–55, 107–127, 147–167, 177–197, and 211–231; these read LKLV…AVIV, AYIG…DQIG, ITTT…LGAA, LIVF…LVSF, and HLLV…LGLS. Asparagine 242 carries an N-linked (GlcNAc...) asparagine glycan. 2 helical membrane passes run 245–265 and 287–307; these read GVAM…HVLP and LEVA…IGHQ.

Belongs to the ZIP transporter (TC 2.A.5) family.

The protein localises to the golgi apparatus. It localises to the trans-Golgi network membrane. It is found in the cell membrane. The protein resides in the cytoplasm. Its subcellular location is the perinuclear region. The protein localises to the mitochondrion. It localises to the nucleus. It catalyses the reaction Zn(2+)(in) = Zn(2+)(out). Its function is as follows. Transports zinc ions across cell and organelle membranes into the cytoplasm and regulates intracellular zinc homeostasis. Participates in the zinc ions efflux out of the secretory compartments. Regulates intracellular zinc level, resulting in the enhancement of AKT1 and MAPK3/MAPK1 (Erk1/2) phosphorylation in response to the BCR activation. Also functions as a membrane androgen receptor that mediates, through a G protein, the non-classical androgen signaling pathway, characterized by the activation of MAPK3/MAPK1 (Erk1/2) and transcription factors CREB1 or ATF1. This pathway contributes to CLDN1 and CLDN5 expression and tight junction formation between adjacent Sertoli cells. Mediates androgen-induced vascular endothelial cell proliferation through activation of an inhibitory G protein leading to the AKT1 and MAPK3/MAPK1 (Erk1/2) activation which in turn modulate inhibition (phosphorylation) of GSK3B and CCND1 transcription. Moreover, has dual functions as a membrane-bound androgen receptor and as an androgen-dependent zinc transporter both of which are mediated through an inhibitory G protein (Gi) that mediates both MAP kinase and zinc signaling leading to the androgen-dependent apoptotic process. This Mus musculus (Mouse) protein is Zinc transporter ZIP9.